Here is a 251-residue protein sequence, read N- to C-terminus: Hydroxyacylglutathione hydrolase (251 aa).

Zn(2+) is bound by residues His53, His55, Asp57, His58, His110, Asp127, and His165.

Belongs to the metallo-beta-lactamase superfamily. Glyoxalase II family. In terms of assembly, monomer. Zn(2+) serves as cofactor.

The enzyme catalyses an S-(2-hydroxyacyl)glutathione + H2O = a 2-hydroxy carboxylate + glutathione + H(+). It participates in secondary metabolite metabolism; methylglyoxal degradation; (R)-lactate from methylglyoxal: step 2/2. Thiolesterase that catalyzes the hydrolysis of S-D-lactoyl-glutathione to form glutathione and D-lactic acid. This chain is Hydroxyacylglutathione hydrolase, found in Escherichia coli (strain 55989 / EAEC).